Consider the following 172-residue polypeptide: Adenine phosphoribosyltransferase (172 aa).

This sequence belongs to the purine/pyrimidine phosphoribosyltransferase family. Homodimer.

It is found in the cytoplasm. It carries out the reaction AMP + diphosphate = 5-phospho-alpha-D-ribose 1-diphosphate + adenine. The protein operates within purine metabolism; AMP biosynthesis via salvage pathway; AMP from adenine: step 1/1. In terms of biological role, catalyzes a salvage reaction resulting in the formation of AMP, that is energically less costly than de novo synthesis. The polypeptide is Adenine phosphoribosyltransferase (Levilactobacillus brevis (strain ATCC 367 / BCRC 12310 / CIP 105137 / JCM 1170 / LMG 11437 / NCIMB 947 / NCTC 947) (Lactobacillus brevis)).